Consider the following 353-residue polypeptide: Photosystem II D2 protein (353 aa).

An N-acetylthreonine modification is found at Thr2. Position 2 is a phosphothreonine (Thr2). The chain crosses the membrane as a helical span at residues Cys41–Thr61. Chlorophyll a is bound at residue His118. Residues Gly125–Pro141 traverse the membrane as a helical segment. The pheophytin a site is built by Gln130 and Asn143. Residues Val153 to Ser166 form a helical membrane-spanning segment. His198 is a binding site for chlorophyll a. Residues Ala208–Asp228 traverse the membrane as a helical segment. A plastoquinone contacts are provided by His215 and Phe262. His215 contributes to the Fe cation binding site. His269 provides a ligand contact to Fe cation. Residues Gly279–Arg295 traverse the membrane as a helical segment.

This sequence belongs to the reaction center PufL/M/PsbA/D family. PSII is composed of 1 copy each of membrane proteins PsbA, PsbB, PsbC, PsbD, PsbE, PsbF, PsbH, PsbI, PsbJ, PsbK, PsbL, PsbM, PsbT, PsbX, PsbY, PsbZ, Psb30/Ycf12, at least 3 peripheral proteins of the oxygen-evolving complex and a large number of cofactors. It forms dimeric complexes. It depends on The D1/D2 heterodimer binds P680, chlorophylls that are the primary electron donor of PSII, and subsequent electron acceptors. It shares a non-heme iron and each subunit binds pheophytin, quinone, additional chlorophylls, carotenoids and lipids. There is also a Cl(-1) ion associated with D1 and D2, which is required for oxygen evolution. The PSII complex binds additional chlorophylls, carotenoids and specific lipids. as a cofactor.

The protein resides in the plastid. It localises to the chloroplast thylakoid membrane. It catalyses the reaction 2 a plastoquinone + 4 hnu + 2 H2O = 2 a plastoquinol + O2. Its function is as follows. Photosystem II (PSII) is a light-driven water:plastoquinone oxidoreductase that uses light energy to abstract electrons from H(2)O, generating O(2) and a proton gradient subsequently used for ATP formation. It consists of a core antenna complex that captures photons, and an electron transfer chain that converts photonic excitation into a charge separation. The D1/D2 (PsbA/PsbD) reaction center heterodimer binds P680, the primary electron donor of PSII as well as several subsequent electron acceptors. D2 is needed for assembly of a stable PSII complex. The polypeptide is Photosystem II D2 protein (Guizotia abyssinica (Niger)).